An 882-amino-acid polypeptide reads, in one-letter code: MEKIRLSDFAKEFGKEAKFAYEKAKEMGLSVKTPSSSLTQEEAAALFEYINTGVNSYIPANKTKDKKETKKPKKATTKTSQSAAKEKEIKKTTTTKAPKTAKKTTSEKQKDKGEQNEIEQDDAQFPAQAPQSKRASKKVESNDMTAPLETKAKVGLRIVRKNDTPQEQPSMVSKKDESKKHAPSYKELLADTADEEYKRHKKDKSKPKVATKHTDQKIHILDDRDISFHSDYDDEQDEIMLFDLNEREVRDEEEENQIRQAITERVHIHRKNPWMNEGSIKRGGKRRKPIKTTKNVDKIKGPISIPEEIRVYEFAELIKAELKDVIKVLFNLGVMATKNDFLDRDAIEILSDEFELEISIQDAPEQNIIESTPDIDSPLLERPPVVTIMGHVDHGKTSLLDYIRNSRIASGEAGGITQHIGAYMVEKNGKKISFIDTPGHEAFTQMRSRGAQVTDIAIIVIAADDGVKQQTIEALNHAKAANVQIIIAMNKMDKENANPDKLKAECAEIGFTPNEWGGEYEFIPISAKNGDGVENLLETILIQAEVLELKASHQGRAKAIVLEASLEKGRGPVATIIMQQGILNVGDSVVADTAFGRVRALLDDRGQNISQLSPSGVAVVTGLSEVPSAGAIFQSVENDTIAREHAQKRALYLRQKELSKSTKVTFDELGEMVAQGNLKTLPLIIKADTQGSLEAIKASLEKLSNDEVRINIIGFGVGGISESDITLCATSTNSLILGFNVRPTGSVKAKAKELGVEIKTYSIIYALLDDIKALLSGLMSPIVEEENTGQAEVRETFNIPKVGTIAGCMVVDGSIQRGIKVRLIRDGVVVHTGAISSLKRFKDDAKEVSKGYECGIMLENHNDIKVGDVFETYKEITKTKIL.

A disordered region spans residues 57 to 211 (YIPANKTKDK…KDKSKPKVAT (155 aa)). Residues 104-115 (TTSEKQKDKGEQ) show a composition bias toward basic and acidic residues. Basic residues predominate over residues 199-211 (RHKKDKSKPKVAT). Residues 381 to 550 (ERPPVVTIMG…LIQAEVLELK (170 aa)) form the tr-type G domain. The tract at residues 390–397 (GHVDHGKT) is G1. Residue 390–397 (GHVDHGKT) coordinates GTP. Residues 415-419 (GITQH) form a G2 region. Residues 436–439 (DTPG) form a G3 region. Residues 436–440 (DTPGH) and 490–493 (NKMD) each bind GTP. Positions 490–493 (NKMD) are G4. The tract at residues 526-528 (SAK) is G5.

It belongs to the TRAFAC class translation factor GTPase superfamily. Classic translation factor GTPase family. IF-2 subfamily.

The protein resides in the cytoplasm. Functionally, one of the essential components for the initiation of protein synthesis. Protects formylmethionyl-tRNA from spontaneous hydrolysis and promotes its binding to the 30S ribosomal subunits. Also involved in the hydrolysis of GTP during the formation of the 70S ribosomal complex. The polypeptide is Translation initiation factor IF-2 (Helicobacter hepaticus (strain ATCC 51449 / 3B1)).